Consider the following 481-residue polypeptide: ATP synthase subunit beta, chloroplastic (481 aa).

161 to 168 provides a ligand contact to ATP; the sequence is GGAGVGKT.

This sequence belongs to the ATPase alpha/beta chains family. F-type ATPases have 2 components, CF(1) - the catalytic core - and CF(0) - the membrane proton channel. CF(1) has five subunits: alpha(3), beta(3), gamma(1), delta(1), epsilon(1). CF(0) has four main subunits: a(1), b(1), b'(1) and c(9-12).

Its subcellular location is the plastid. The protein resides in the chloroplast thylakoid membrane. The catalysed reaction is ATP + H2O + 4 H(+)(in) = ADP + phosphate + 5 H(+)(out). Produces ATP from ADP in the presence of a proton gradient across the membrane. The catalytic sites are hosted primarily by the beta subunits. This is ATP synthase subunit beta, chloroplastic from Pylaiella littoralis (Seaweed).